Consider the following 320-residue polypeptide: SUMO-activating enzyme subunit 1B-1 (320 aa).

Met-1 is modified (N-acetylmethionine).

The protein belongs to the ubiquitin-activating E1 family. In terms of assembly, heterodimer of SAE1A or SAE1B and SAE2. The complex binds SUMO proteins via SAE2.

Its subcellular location is the nucleus. The protein operates within protein modification; protein sumoylation. Functionally, the dimeric enzyme acts as an E1 ligase for SUMO1 and SUMO2. It mediates ATP-dependent activation of SUMO proteins and formation of a thioester with a conserved cysteine residue on SAE2. Functionally redundant with its paralog SAE1A. In Arabidopsis thaliana (Mouse-ear cress), this protein is SUMO-activating enzyme subunit 1B-1 (SAE1B-1).